The primary structure comprises 217 residues: Large ribosomal subunit protein uL3 (217 aa).

The protein belongs to the universal ribosomal protein uL3 family. Part of the 50S ribosomal subunit. Forms a cluster with proteins L14 and L19.

In terms of biological role, one of the primary rRNA binding proteins, it binds directly near the 3'-end of the 23S rRNA, where it nucleates assembly of the 50S subunit. The sequence is that of Large ribosomal subunit protein uL3 from Mycobacterium bovis (strain ATCC BAA-935 / AF2122/97).